A 183-amino-acid chain; its full sequence is uncharacterized protein (183 aa).

This is an uncharacterized protein from Acanthamoeba polyphaga (Amoeba).